Consider the following 434-residue polypeptide: Glutamyl-tRNA reductase (434 aa).

Residues 49–52 (TCNR), S109, 114–116 (EPQ), and Q120 each bind substrate. Residue C50 is the Nucleophile of the active site. Position 189-194 (189-194 (GAGEMC)) interacts with NADP(+).

It belongs to the glutamyl-tRNA reductase family. Homodimer.

The catalysed reaction is (S)-4-amino-5-oxopentanoate + tRNA(Glu) + NADP(+) = L-glutamyl-tRNA(Glu) + NADPH + H(+). The protein operates within porphyrin-containing compound metabolism; protoporphyrin-IX biosynthesis; 5-aminolevulinate from L-glutamyl-tRNA(Glu): step 1/2. Catalyzes the NADPH-dependent reduction of glutamyl-tRNA(Glu) to glutamate 1-semialdehyde (GSA). This chain is Glutamyl-tRNA reductase, found in Geobacter metallireducens (strain ATCC 53774 / DSM 7210 / GS-15).